We begin with the raw amino-acid sequence, 313 residues long: Protein-methionine-sulfoxide reductase catalytic subunit MsrP (313 aa).

A signal peptide (tat-type signal) is located at residues 1–45 (MPAYRPPHIASSEITPKSFYLSRRNFLGTAAGLAAIGLAGREAIA). Residues N71, 74 to 75 (YE), C128, T163, N213, R218, and 229 to 231 (GIK) contribute to the Mo-molybdopterin site.

It belongs to the MsrP family. In terms of assembly, heterodimer of a catalytic subunit (MsrP) and a heme-binding subunit (MsrQ). Requires Mo-molybdopterin as cofactor. Predicted to be exported by the Tat system. The position of the signal peptide cleavage has not been experimentally proven.

The protein localises to the periplasm. The catalysed reaction is L-methionyl-[protein] + a quinone + H2O = L-methionyl-(S)-S-oxide-[protein] + a quinol. It carries out the reaction L-methionyl-[protein] + a quinone + H2O = L-methionyl-(R)-S-oxide-[protein] + a quinol. Part of the MsrPQ system that repairs oxidized periplasmic proteins containing methionine sulfoxide residues (Met-O), using respiratory chain electrons. Thus protects these proteins from oxidative-stress damage caused by reactive species of oxygen and chlorine generated by the host defense mechanisms. MsrPQ is essential for the maintenance of envelope integrity under bleach stress, rescuing a wide series of structurally unrelated periplasmic proteins from methionine oxidation. The catalytic subunit MsrP is non-stereospecific, being able to reduce both (R-) and (S-) diastereoisomers of methionine sulfoxide. This is Protein-methionine-sulfoxide reductase catalytic subunit MsrP from Agrobacterium fabrum (strain C58 / ATCC 33970) (Agrobacterium tumefaciens (strain C58)).